The primary structure comprises 165 residues: RxLR effector protein CRE12 (165 aa).

An N-terminal signal peptide occupies residues 1–23; it reads MRLAAFVLVAVAFAIIPDGRVSA. The RxLR-dEER signature appears at 40-59; sequence RLLRLNAVPQPVETGNQEER.

The protein belongs to the RxLR effector family.

The protein resides in the secreted. The protein localises to the host cell. Effector that is involved in host plant infection. Contributes to virulence during the early infection stage, by inhibiting plant defense responses induced by both PAMP-triggered immunity (PTI) and effector-triggered immunity (ETI). This chain is RxLR effector protein CRE12, found in Phytophthora infestans (strain T30-4) (Potato late blight agent).